A 633-amino-acid chain; its full sequence is Lysophospholipase 1 (633 aa).

Residues 1–20 (MKTTTVACAVAGLLFSCVSG) form the signal peptide. The 548-residue stretch at 47–594 (GCPASRPTIR…QRYCWDGSLN (548 aa)) folds into the PLA2c domain. 18 N-linked (GlcNAc...) asparagine glycosylation sites follow: Asn64, Asn104, Asn139, Asn173, Asn246, Asn290, Asn329, Asn358, Asn397, Asn450, Asn463, Asn469, Asn497, Asn500, Asn521, Asn549, Asn555, and Asn594. Residue Ser609 is the site of GPI-like-anchor amidated serine attachment. Positions 610-633 (AASGIIPSISTVAMAVVFAAWTIF) are cleaved as a propeptide — removed in mature form.

This sequence belongs to the lysophospholipase family. In terms of processing, the GPI-like anchor contains a phosphoceramide lipid group. The anchor position has not been determined.

It localises to the cell membrane. It catalyses the reaction a 1-acyl-sn-glycero-3-phosphocholine + H2O = sn-glycerol 3-phosphocholine + a fatty acid + H(+). In terms of biological role, catalyzes the release of fatty acids from lysophospholipids. The protein is Lysophospholipase 1 (plb1) of Aspergillus fumigatus (strain CBS 144.89 / FGSC A1163 / CEA10) (Neosartorya fumigata).